The chain runs to 142 residues: Large ribosomal subunit protein uL13 (142 aa).

Belongs to the universal ribosomal protein uL13 family. Part of the 50S ribosomal subunit.

Functionally, this protein is one of the early assembly proteins of the 50S ribosomal subunit, although it is not seen to bind rRNA by itself. It is important during the early stages of 50S assembly. The polypeptide is Large ribosomal subunit protein uL13 (Haemophilus influenzae (strain 86-028NP)).